We begin with the raw amino-acid sequence, 134 residues long: Protein NrdI (134 aa).

Belongs to the NrdI family.

Probably involved in ribonucleotide reductase function. The protein is Protein NrdI of Yersinia pseudotuberculosis serotype O:1b (strain IP 31758).